The following is a 75-amino-acid chain: Dermaseptin-SP3 (75 aa).

The signal sequence occupies residues Met-1–Cys-22. Positions Glu-23–Arg-45 are excised as a propeptide. Pro-72 is modified (proline amide). A propeptide spanning residues Glu-74–Gln-75 is cleaved from the precursor.

Belongs to the frog skin active peptide (FSAP) family. Dermaseptin subfamily. Expressed by the skin glands.

The protein resides in the secreted. It localises to the target cell membrane. Its function is as follows. Antimicrobial peptide with activity against Gram-positive and Gram-negative bacteria and fungi. Has been tested against E.coli (MIC=47.50-128 uM), S.aureus (MIC=189.98-512 uM), K.pneumoniae (MIC&gt;189.98 uM) and C.albicans (MIC&gt;189.98 uM). Probably acts by disturbing membrane functions with its alpha-helical amphipathic structure. May penetrate bacterial membranes, but stay at the mammalian membrane surface. Shows a very weak hemolytic activity. The chain is Dermaseptin-SP3 from Agalychnis spurrelli (Gliding leaf frog).